Reading from the N-terminus, the 492-residue chain is Trigger factor (492 aa).

Positions 77 to 96 are disordered; that stretch reads EILSSRGEKSATQPAISMTE. Positions 169–254 constitute a PPIase FKBP-type domain; the sequence is GDRVTMNYLG…VKEVAAAAAV (86 aa). The tract at residues 439-492 is disordered; it reads ELLADDGEEETETKKKAPAKKKAAAKADDAAEGEEAAPKKKAPAKKKATEADAE.

It belongs to the FKBP-type PPIase family. Tig subfamily.

It is found in the cytoplasm. It carries out the reaction [protein]-peptidylproline (omega=180) = [protein]-peptidylproline (omega=0). Its function is as follows. Involved in protein export. Acts as a chaperone by maintaining the newly synthesized protein in an open conformation. Functions as a peptidyl-prolyl cis-trans isomerase. The protein is Trigger factor of Agrobacterium fabrum (strain C58 / ATCC 33970) (Agrobacterium tumefaciens (strain C58)).